The primary structure comprises 318 residues: Pantothenate kinase (318 aa).

96–103 serves as a coordination point for ATP; it reads GSVAVGKS.

This sequence belongs to the prokaryotic pantothenate kinase family.

The protein localises to the cytoplasm. It carries out the reaction (R)-pantothenate + ATP = (R)-4'-phosphopantothenate + ADP + H(+). It functions in the pathway cofactor biosynthesis; coenzyme A biosynthesis; CoA from (R)-pantothenate: step 1/5. In Bradyrhizobium diazoefficiens (strain JCM 10833 / BCRC 13528 / IAM 13628 / NBRC 14792 / USDA 110), this protein is Pantothenate kinase.